The following is a 542-amino-acid chain: Chaperonin GroEL (542 aa).

Residues 29–32 (TLGP), lysine 50, 86–90 (DGTTT), glycine 413, 477–479 (NAA), and aspartate 493 contribute to the ATP site.

The protein belongs to the chaperonin (HSP60) family. As to quaternary structure, forms a cylinder of 14 subunits composed of two heptameric rings stacked back-to-back. Interacts with the co-chaperonin GroES.

The protein localises to the cytoplasm. The catalysed reaction is ATP + H2O + a folded polypeptide = ADP + phosphate + an unfolded polypeptide.. Functionally, together with its co-chaperonin GroES, plays an essential role in assisting protein folding. The GroEL-GroES system forms a nano-cage that allows encapsulation of the non-native substrate proteins and provides a physical environment optimized to promote and accelerate protein folding. The protein is Chaperonin GroEL of Solibacter usitatus (strain Ellin6076).